A 492-amino-acid chain; its full sequence is Spore germination protein GerLA (492 aa).

3 helical membrane passes run 295–315 (IIAVLLPAMYVALVSYHQGLI), 384–404 (FLVIIIAVTAIATFSLPVYSI), and 410–430 (ILLFVFVLAATAFGLYGIILA).

The protein belongs to the GerABKA family.

Its subcellular location is the membrane. Contributes to the L-alanine germination response. This chain is Spore germination protein GerLA (gerLA), found in Bacillus cereus.